The following is a 279-amino-acid chain: Lysozyme-like protein 2 (279 aa).

The N-terminal stretch at 1-19 (MIKLLVSFTILFVLSSARP) is a signal peptide. The region spanning 47–265 (MGNAVDFSFP…AAAPKTEVNM (219 aa)) is the Ch-type lysozyme domain.

This sequence belongs to the glycosyl hydrolase 25 family. Expressed in intestine.

Functionally, involved in resistance to Gram-positive bacteria P.aeruginosa or B.thuringiensis infection. The protein is Lysozyme-like protein 2 of Caenorhabditis elegans.